The primary structure comprises 257 residues: UPF0246 protein RSc2009 (257 aa).

Belongs to the UPF0246 family.

This Ralstonia nicotianae (strain ATCC BAA-1114 / GMI1000) (Ralstonia solanacearum) protein is UPF0246 protein RSc2009.